A 200-amino-acid chain; its full sequence is Signal peptidase complex catalytic subunit SEC11 (200 aa).

The Cytoplasmic segment spans residues 1 to 15; that stretch reads MFAELAPYLSNPRQT. Residues 16–33 form a helical; Signal-anchor for type II membrane protein membrane-spanning segment; that stretch reads LAQLLNFALVLSTAFMGW. Residues 34 to 200 are Lumenal-facing; sequence KALSVYTNSS…MGVMVMLQRE (167 aa). N-linked (GlcNAc...) asparagine glycosylation occurs at asparagine 41. Catalysis depends on charge relay system residues serine 53 and histidine 92. The interval 101-134 is disordered; sequence GDGGKKSQRRLEREADKRSGPGLSSPVSHQMLTK. Positions 103–119 are enriched in basic and acidic residues; the sequence is GGKKSQRRLEREADKRS. Aspartate 142 functions as the Charge relay system in the catalytic mechanism. The tract at residues 186 to 197 is C-terminal short (CTS) helix; that stretch reads VLLGIMGVMVML.

This sequence belongs to the peptidase S26B family. In terms of assembly, component of the signal peptidase complex (SPC) composed of a catalytic subunit SEC11 and three accessory subunits SPC1, SPC2 and SPC3. The complex induces a local thinning of the ER membrane which is used to measure the length of the signal peptide (SP) h-region of protein substrates. This ensures the selectivity of the complex towards h-regions shorter than 18-20 amino acids. SPC associates with the translocon complex.

The protein localises to the endoplasmic reticulum membrane. The catalysed reaction is Cleavage of hydrophobic, N-terminal signal or leader sequences from secreted and periplasmic proteins.. Functionally, catalytic component of the signal peptidase complex (SPC) which catalyzes the cleavage of N-terminal signal sequences from nascent proteins as they are translocated into the lumen of the endoplasmic reticulum. Specifically cleaves N-terminal signal peptides that contain a hydrophobic alpha-helix (h-region) shorter than 18-20 amino acids. In Arthroderma benhamiae (strain ATCC MYA-4681 / CBS 112371) (Trichophyton mentagrophytes), this protein is Signal peptidase complex catalytic subunit SEC11 (SEC11).